We begin with the raw amino-acid sequence, 255 residues long: Probable UDP-N-acetylglucosamine pyrophosphorylase (255 aa).

The catalysed reaction is N-acetyl-alpha-D-glucosamine 1-phosphate + UTP + H(+) = UDP-N-acetyl-alpha-D-glucosamine + diphosphate. The protein operates within nucleotide-sugar biosynthesis; UDP-N-acetyl-alpha-D-glucosamine biosynthesis; UDP-N-acetyl-alpha-D-glucosamine from N-acetyl-alpha-D-glucosamine 1-phosphate: step 1/1. In Acanthamoeba polyphaga (Amoeba), this protein is Probable UDP-N-acetylglucosamine pyrophosphorylase.